A 438-amino-acid chain; its full sequence is Phosphoribosylamine--glycine ligase (438 aa).

In terms of domain architecture, ATP-grasp spans 108 to 316; the sequence is REFMERNDIP…LVEIAEGIVK (209 aa). 135–194 contacts ATP; the sequence is IDEYGKPVVVKPLGLTGGKGVKVVGYQLKDNEEAKEYAEYLIKKDGKVLIEERTDGVEFT. Positions 274, 286, and 288 each coordinate Mg(2+). 3 residues coordinate Mn(2+): Q274, E286, and N288.

It belongs to the GARS family. Mg(2+) is required as a cofactor. The cofactor is Mn(2+).

The catalysed reaction is 5-phospho-beta-D-ribosylamine + glycine + ATP = N(1)-(5-phospho-beta-D-ribosyl)glycinamide + ADP + phosphate + H(+). It participates in purine metabolism; IMP biosynthesis via de novo pathway; N(1)-(5-phospho-D-ribosyl)glycinamide from 5-phospho-alpha-D-ribose 1-diphosphate: step 2/2. This chain is Phosphoribosylamine--glycine ligase, found in Pyrococcus abyssi (strain GE5 / Orsay).